The following is a 560-amino-acid chain: Muellerian-inhibiting factor (560 aa).

The signal sequence occupies residues 1–24; it reads MRDLPLTSLALVLSALGALLGTEA. Residues 25–451 constitute a propeptide that is removed on maturation; that stretch reads LRAEEPAVGT…DPRGPGRAQR (427 aa). A glycan (N-linked (GlcNAc...) asparagine) is linked at N64. Residues 259-287 form a disordered region; sequence PLPAHGQLDTVPFPPPRPSAELEESPPSA. N-linked (GlcNAc...) asparagine glycosylation occurs at N329. 3 disulfide bridges follow: C462-C526, C488-C557, and C492-C559.

Belongs to the TGF-beta family. In terms of assembly, homodimer; disulfide-linked. Post-translationally, preproprotein is proteolytically processed to generate N- and C-terminal cleavage products that homodimerize and associate to form a biologically active non-covalent complex. Binding of the non-covalent complex to AMHR2 induces dissociation of the pro-region from the mature C-terminal dimer. The N-terminal portion of the protein, despite having no intrinsic activity, has the role of amplifying the activity of the C-terminus. In terms of tissue distribution, in ovaries, AMH is detected in granulosa cells of early growing follicles.

It is found in the secreted. Its function is as follows. Plays an important role in several reproductive functions. Induces Muellerian duct regression during male fetal sexual differentiation. Also plays a role in Leydig cell differentiation and function. In female acts as a negative regulator of the primordial to primary follicle transition and decreases FSH sensitivity of growing follicles. AMH signals by binding to a specific type-II receptor, AMHR2, that heterodimerizes with type-I receptors (ACVR1 and BMPR1A), and recruiting SMAD proteins that are translocated to the nucleus to regulate target gene expression. The polypeptide is Muellerian-inhibiting factor (Homo sapiens (Human)).